A 719-amino-acid chain; its full sequence is DNA replication licensing factor MCM7 (719 aa).

Alanine 2 is modified (N-acetylalanine). Glycyl lysine isopeptide (Lys-Gly) (interchain with G-Cter in SUMO2) cross-links involve residues lysine 15 and lysine 28. Phosphoserine occurs at positions 121 and 314. Positions 332–538 (FYEKLAASIA…NDLRLAQHIT (207 aa)) constitute an MCM domain. Residue tyrosine 345 coordinates ATP. At serine 365 the chain carries Phosphoserine. Glycine 384, alanine 386, lysine 387, serine 388, and asparagine 489 together coordinate ATP. Serine 500 carries the phosphoserine modification. An Arginine finger motif is present at residues 513-516 (SRFD). Position 514 (arginine 514) interacts with ATP. The tract at residues 521-564 (IQDRPDRDNDLRLAQHITYVHQHSRQPPAQFEPLDMKLMRRYIA) is interaction with RAD17. The interaction with ATRIP stretch occupies residues 577–719 (LADYITAAYV…NTARTRITFV (143 aa)). ATP is bound at residue arginine 604. Serine 678 is subject to Phosphoserine.

Belongs to the MCM family. In terms of assembly, component of the MCM2-7 complex. The complex forms a toroidal hexameric ring with the proposed subunit order MCM2-MCM6-MCM4-MCM7-MCM3-MCM5. Component of the CMG helicase complex, a hexameric ring of related MCM2-7 subunits stabilized by CDC45 and the tetrameric GINS complex. Interacts with the ATR-ATRIP complex and with RAD17. Interacts with TIPIN. Interacts with MCMBP. Interacts with ANKRD17. Component of the replisome complex composed of at least DONSON, MCM2, MCM7, PCNA and TICRR. In terms of processing, O-glycosylated (O-GlcNAcylated), in a cell cycle-dependent manner. Ubiquitinated by ECS(LRR1) E3 ubiquitin-protein ligase complex when forks converge following formation of DNA interstrand cross-links. During mitosis, ubiquitinated by TRAIP when forks converge following formation of DNA interstrand cross-links. Short ubiquitin chains on MCM7 promote recruitment of DNA glycosylase NEIL3. If the interstrand cross-link cannot be cleaved by NEIL3, the ubiquitin chains continue to grow on MCM7, promoting the unloading of the CMG helicase complex by the VCP/p97 ATPase.

Its subcellular location is the nucleus. It is found in the chromosome. The enzyme catalyses ATP + H2O = ADP + phosphate + H(+). Functionally, acts as a component of the MCM2-7 complex (MCM complex) which is the replicative helicase essential for 'once per cell cycle' DNA replication initiation and elongation in eukaryotic cells. Core component of CDC45-MCM-GINS (CMG) helicase, the molecular machine that unwinds template DNA during replication, and around which the replisome is built. The active ATPase sites in the MCM2-7 ring are formed through the interaction surfaces of two neighboring subunits such that a critical structure of a conserved arginine finger motif is provided in trans relative to the ATP-binding site of the Walker A box of the adjacent subunit. The six ATPase active sites, however, are likely to contribute differentially to the complex helicase activity. Required for S-phase checkpoint activation upon UV-induced damage. This is DNA replication licensing factor MCM7 (MCM7) from Bos taurus (Bovine).